The following is a 225-amino-acid chain: Acidic leucine-rich nuclear phosphoprotein 32-related protein 2 (225 aa).

LRR repeat units lie at residues 39-60 (KLEL…PVLP), 61-82 (ALNY…DVLI), and 87-107 (EIKK…RTLK). One can recognise an LRRCT domain in the interval 121–161 (SSLGLLDDYRVKMFEMIPSLKILDGCDVDGEEVEEEFAAGE). Acidic residues predominate over residues 155–175 (EEFAAGEGAEDSDEGDSDEDG). Positions 155-225 (EEFAAGEGAE…DEPEAKKSAE (71 aa)) are disordered.

It belongs to the ANP32 family.

This Caenorhabditis elegans protein is Acidic leucine-rich nuclear phosphoprotein 32-related protein 2.